The primary structure comprises 610 residues: Myosin light chain kinase 2, skeletal/cardiac muscle (610 aa).

Disordered stretches follow at residues 1-168 and 196-240; these read MATE…HSPS and VSET…DTSQ. A2 carries the post-translational modification N-acetylalanine. 2 stretches are compositionally biased toward basic and acidic residues: residues 32–63 and 70–82; these read SEKE…KKNP and KTPE…KKGD. Over residues 94 to 109 the composition is skewed to gly residues; sequence SGEGDGGGGPAEGGTG. The span at 141 to 157 shows a compositional bias: basic and acidic residues; that stretch reads GEAKAGKKAAECREAGR. Residues S160, S166, and S168 each carry the phosphoserine modification. A Protein kinase domain is found at 299–554; it reads MNSKEALGGG…AEQCLAHPWL (256 aa). Residues 305 to 313 and K328 each bind ATP; that span reads LGGGKFGAV. The active-site Proton acceptor is D420. Position 459 is a phosphothreonine (T459). Residues 588-600 form a calmodulin-binding region; that stretch reads IAVSAANRFKKIS.

It belongs to the protein kinase superfamily. CAMK Ser/Thr protein kinase family. As to quaternary structure, may interact with centrin.

It is found in the cytoplasm. The catalysed reaction is L-seryl-[myosin light chain] + ATP = O-phospho-L-seryl-[myosin light chain] + ADP + H(+). It carries out the reaction L-threonyl-[myosin light chain] + ATP = O-phospho-L-threonyl-[myosin light chain] + ADP + H(+). In terms of biological role, implicated in the level of global muscle contraction and cardiac function. Phosphorylates a specific serine in the N-terminus of a myosin light chain. The protein is Myosin light chain kinase 2, skeletal/cardiac muscle (Mylk2) of Rattus norvegicus (Rat).